Reading from the N-terminus, the 757-residue chain is Polyribonucleotide nucleotidyltransferase (757 aa).

Mg(2+) contacts are provided by Asp-531 and Asp-537. The KH domain maps to 597–656; that stretch reads PRVTTIRVPVDKIGEVIGPKGKIINAITEETGAQISIEDDGTVFVGATDGPSAQAAIDRI. The S1 motif domain maps to 668–737; sequence GERFLGTVVK…KRGKISLVLV (70 aa).

This sequence belongs to the polyribonucleotide nucleotidyltransferase family. Mg(2+) serves as cofactor.

It localises to the cytoplasm. The catalysed reaction is RNA(n+1) + phosphate = RNA(n) + a ribonucleoside 5'-diphosphate. Involved in mRNA degradation. Catalyzes the phosphorolysis of single-stranded polyribonucleotides processively in the 3'- to 5'-direction. This Mycolicibacterium paratuberculosis (strain ATCC BAA-968 / K-10) (Mycobacterium paratuberculosis) protein is Polyribonucleotide nucleotidyltransferase.